The following is a 389-amino-acid chain: Succinate--CoA ligase [ADP-forming] subunit beta (389 aa).

Residues 9–244 (KEIFRSMGVA…LDEEDPKEIE (236 aa)) form the ATP-grasp domain. Residues Lys-46, 53 to 55 (GRG), Glu-99, Cys-102, and Glu-107 contribute to the ATP site. Mg(2+)-binding residues include Asn-199 and Asp-213. Substrate-binding positions include Asn-264 and 321–323 (GIM).

It belongs to the succinate/malate CoA ligase beta subunit family. As to quaternary structure, heterotetramer of two alpha and two beta subunits. Mg(2+) serves as cofactor.

The catalysed reaction is succinate + ATP + CoA = succinyl-CoA + ADP + phosphate. It carries out the reaction GTP + succinate + CoA = succinyl-CoA + GDP + phosphate. The protein operates within carbohydrate metabolism; tricarboxylic acid cycle; succinate from succinyl-CoA (ligase route): step 1/1. In terms of biological role, succinyl-CoA synthetase functions in the citric acid cycle (TCA), coupling the hydrolysis of succinyl-CoA to the synthesis of either ATP or GTP and thus represents the only step of substrate-level phosphorylation in the TCA. The beta subunit provides nucleotide specificity of the enzyme and binds the substrate succinate, while the binding sites for coenzyme A and phosphate are found in the alpha subunit. The chain is Succinate--CoA ligase [ADP-forming] subunit beta from Macrococcus caseolyticus (strain JCSC5402) (Macrococcoides caseolyticum).